The chain runs to 1040 residues: Multidrug resistance protein MdtB (1040 aa).

11 consecutive transmembrane segments (helical) span residues 15-37, 345-362, 367-389, 396-418, 438-460, 472-494, 535-557, 867-889, 909-931, 968-990, and 1000-1022; these read LFIM…GIIG, FELM…YLFL, ATII…MVFL, LTLM…VIEN, GEIG…PLLF, FAIT…TPMM, HPWL…WVFI, VWLI…ESFI, LMIA…IGIV, ILMT…GVGA, and MVGG…YLLF.

This sequence belongs to the resistance-nodulation-cell division (RND) (TC 2.A.6) family. MdtB subfamily. As to quaternary structure, part of a tripartite efflux system composed of MdtA, MdtB and MdtC. MdtB forms a heteromultimer with MdtC.

It is found in the cell inner membrane. Functionally, the MdtABC tripartite complex confers resistance against novobiocin and deoxycholate. The polypeptide is Multidrug resistance protein MdtB (Escherichia coli O157:H7).